The following is a 256-amino-acid chain: Osteocalcin 2 (256 aa).

An N-terminal signal peptide occupies residues 1-18 (MKTLVLLSICALLSVCWS). The propeptide occupies 19 to 209 (MGAVEPEVVV…LASVLLRRRR (191 aa)). Residues 38 to 186 (AAPADPAAAA…SSSSSSSSES (149 aa)) show a composition bias toward low complexity. The tract at residues 38–193 (AAPADPAAAA…SESASDEAAK (156 aa)) is disordered. Positions 218 to 252 (PLQLESLREVCELNIACDEMAETAGIVAAYVAYYG) constitute a Gla domain. Residues glutamate 222, glutamate 226, glutamate 229, and aspartate 235 each coordinate Ca(2+). A 4-carboxyglutamate mark is found at glutamate 222, glutamate 226, and glutamate 229. Cysteine 228 and cysteine 234 form a disulfide bridge. Position 236 is a 4-carboxyglutamate (glutamate 236).

It belongs to the osteocalcin/matrix Gla protein family. Post-translationally, gamma-carboxyglutamate residues are formed by vitamin K dependent carboxylation by GGCX. These residues are essential for the binding of calcium.

The protein localises to the secreted. In terms of biological role, the carboxylated form is one of the main organic components of the bone matrix, which constitutes 1-2% of the total bone protein. The carboxylated form binds strongly to apatite and calcium. The sequence is that of Osteocalcin 2 from Diplodus sargus (White seabream).